The primary structure comprises 104 residues: Large ribosomal subunit protein uL24 (104 aa).

It belongs to the universal ribosomal protein uL24 family. As to quaternary structure, part of the 50S ribosomal subunit.

Its function is as follows. One of two assembly initiator proteins, it binds directly to the 5'-end of the 23S rRNA, where it nucleates assembly of the 50S subunit. One of the proteins that surrounds the polypeptide exit tunnel on the outside of the subunit. This chain is Large ribosomal subunit protein uL24, found in Bradyrhizobium sp. (strain BTAi1 / ATCC BAA-1182).